The chain runs to 402 residues: Phosphoribulokinase, chloroplastic (402 aa).

The transit peptide at 1–51 (MAVCTVYTIPTTTHLGSSFNQNNKQVFFNYKRSSSSNNTLFTTRPSYVITC) directs the protein to the chloroplast. Cys67 and Cys106 are joined by a disulfide.

This sequence belongs to the phosphoribulokinase family.

It localises to the plastid. The protein localises to the chloroplast. The catalysed reaction is D-ribulose 5-phosphate + ATP = D-ribulose 1,5-bisphosphate + ADP + H(+). It participates in carbohydrate biosynthesis; Calvin cycle. Its activity is regulated as follows. Light regulated via thioredoxin by reversible oxidation/reduction of sulfhydryl/disulfide groups. This chain is Phosphoribulokinase, chloroplastic, found in Spinacia oleracea (Spinach).